Here is a 240-residue protein sequence, read N- to C-terminus: Tetrahydromethanopterin S-methyltransferase subunit A (240 aa).

Over M1–K218 the chain is Cytoplasmic. H85 contributes to the 5-hydroxybenzimidazolylcob(I)amide binding site. A helical membrane pass occupies residues I219–G239. R240 is a topological domain (extracellular).

It belongs to the MtrA family. As to quaternary structure, the complex is composed of 8 subunits; MtrA, MtrB, MtrC, MtrD, MtrE, MtrF, MtrG and MtrH. 5-hydroxybenzimidazolylcob(I)amide is required as a cofactor.

The protein localises to the cell membrane. The enzyme catalyses 5-methyl-5,6,7,8-tetrahydromethanopterin + coenzyme M + 2 Na(+)(in) = 5,6,7,8-tetrahydromethanopterin + methyl-coenzyme M + 2 Na(+)(out). The protein operates within one-carbon metabolism; methanogenesis from CO(2); methyl-coenzyme M from 5,10-methylene-5,6,7,8-tetrahydromethanopterin: step 2/2. Functionally, part of a complex that catalyzes the formation of methyl-coenzyme M and tetrahydromethanopterin from coenzyme M and methyl-tetrahydromethanopterin. This is an energy-conserving, sodium-ion translocating step. The protein is Tetrahydromethanopterin S-methyltransferase subunit A of Methanosarcina barkeri (strain Fusaro / DSM 804).